A 142-amino-acid polypeptide reads, in one-letter code: MAAKKVVKQIKLQVEAGKANPAPPVGPALGQAGLNIMEFCKQFNERSKAQIGLKLPVVITVFSDRSFTFITKSPPAALLVKKAIGLETGSATPHTHKVGKITRKQLEEIAKTKMEDLNANDIDAAVNIIAGTCRSMGVTVEA.

The protein belongs to the universal ribosomal protein uL11 family. Part of the ribosomal stalk of the 50S ribosomal subunit. Interacts with L10 and the large rRNA to form the base of the stalk. L10 forms an elongated spine to which L12 dimers bind in a sequential fashion forming a multimeric L10(L12)X complex. Post-translationally, one or more lysine residues are methylated.

Functionally, forms part of the ribosomal stalk which helps the ribosome interact with GTP-bound translation factors. This chain is Large ribosomal subunit protein uL11, found in Leptospira interrogans serogroup Icterohaemorrhagiae serovar copenhageni (strain Fiocruz L1-130).